Here is a 435-residue protein sequence, read N- to C-terminus: Serine/threonine-protein kinase 40 (435 aa).

The Protein kinase domain maps to 35 to 332 (FILGPRLGNS…EELDSLSSII (298 aa)). Residues 41-49 (LGNSPVPSI) and Lys66 each bind ATP. The active-site Proton acceptor is the Asp197.

This sequence belongs to the protein kinase superfamily. CAMK Ser/Thr protein kinase family.

It is found in the nucleus. The protein localises to the cytoplasm. It catalyses the reaction L-seryl-[protein] + ATP = O-phospho-L-seryl-[protein] + ADP + H(+). It carries out the reaction L-threonyl-[protein] + ATP = O-phospho-L-threonyl-[protein] + ADP + H(+). In terms of biological role, may be a negative regulator of NF-kappa-B and p53-mediated gene transcription. The chain is Serine/threonine-protein kinase 40 (STK40) from Gallus gallus (Chicken).